Consider the following 504-residue polypeptide: Pentatricopeptide repeat-containing protein At1g09220, mitochondrial (504 aa).

The transit peptide at Met1–Tyr87 directs the protein to the mitochondrion. 10 PPR repeats span residues Lys76–Ser110, Asp120–Ser156, His157–Arg187, Asn188–Ser222, Trp223–Lys253, Asn255–Pro289, Asp291–Gly321, Asn324–Pro358, Asn359–Glu390, and Asp396–Val430. A type E motif; degenerate region spans residues Val431–Thr504.

This sequence belongs to the PPR family. PCMP-E subfamily.

The protein resides in the mitochondrion. This Arabidopsis thaliana (Mouse-ear cress) protein is Pentatricopeptide repeat-containing protein At1g09220, mitochondrial (PCMP-E25).